Consider the following 283-residue polypeptide: 2-hydroxy-6-oxononadienedioate/2-hydroxy-6-oxononatrienedioate hydrolase (283 aa).

Positions 35–269 (VVVMFHGSGP…KCGHWAQWEH (235 aa)) constitute an AB hydrolase-1 domain. H263 serves as the catalytic Proton acceptor.

Belongs to the AB hydrolase superfamily. MhpC family. Homodimer.

It carries out the reaction (2Z,4E)-2-hydroxy-6-oxonona-2,4-dienedioate + H2O = (2Z)-2-hydroxypenta-2,4-dienoate + succinate + H(+). It catalyses the reaction (2Z,4E,7E)-2-hydroxy-6-oxonona-2,4,7-trienedioate + H2O = (2Z)-2-hydroxypenta-2,4-dienoate + fumarate + H(+). Its pathway is aromatic compound metabolism; 3-phenylpropanoate degradation. Its function is as follows. Catalyzes the cleavage of the C5-C6 bond of 2-hydroxy-6-oxononadienedioate and 2-hydroxy-6-oxononatrienedioate, a dienol ring fission product of the bacterial meta-cleavage pathway for degradation of phenylpropionic acid. The protein is 2-hydroxy-6-oxononadienedioate/2-hydroxy-6-oxononatrienedioate hydrolase of Pseudomonas sp.